The chain runs to 202 residues: Outer-membrane lipoprotein carrier protein (202 aa).

The signal sequence occupies residues 1–20 (MKKQLLIGSVLLVASSQVWA).

This sequence belongs to the LolA family. As to quaternary structure, monomer.

Its subcellular location is the periplasm. Participates in the translocation of lipoproteins from the inner membrane to the outer membrane. Only forms a complex with a lipoprotein if the residue after the N-terminal Cys is not an aspartate (The Asp acts as a targeting signal to indicate that the lipoprotein should stay in the inner membrane). The protein is Outer-membrane lipoprotein carrier protein of Aeromonas salmonicida (strain A449).